A 184-amino-acid chain; its full sequence is Protein PLANT CADMIUM RESISTANCE 5 (184 aa).

Over residues 1–26 (MGRPVGQTNQAQPSVQHTASPSNKVS) the composition is skewed to polar residues. Residues 1-33 (MGRPVGQTNQAQPSVQHTASPSNKVSHNGGIGK) are disordered. The helical transmembrane segment at 94–114 (AGLLYGALFFTGASFVYSYMF) threads the bilayer.

The protein belongs to the cornifelin family.

It localises to the membrane. Its function is as follows. May be involved in heavy metals transport. This Arabidopsis thaliana (Mouse-ear cress) protein is Protein PLANT CADMIUM RESISTANCE 5 (PCR5).